We begin with the raw amino-acid sequence, 120 residues long: Large ribosomal subunit protein bL20c (120 aa).

Belongs to the bacterial ribosomal protein bL20 family.

The protein resides in the plastid. Functionally, binds directly to 23S ribosomal RNA and is necessary for the in vitro assembly process of the 50S ribosomal subunit. It is not involved in the protein synthesizing functions of that subunit. The sequence is that of Large ribosomal subunit protein bL20c (rpl20) from Cuscuta gronovii (Common dodder).